The primary structure comprises 382 residues: Kelch domain-containing protein 3 (382 aa).

Kelch repeat units lie at residues 25–77 (RVYS…PYMR), 88–138 (TVFL…VLGK), 139–189 (IMYI…TMLG), 191–249 (HMYV…GYNG), and 251–301 (LYIF…IVGD).

As to quaternary structure, component of a CRL2(KLHDC3) complex, also named ECS(KLHDC3) complex, composed of CUL2, Elongin BC (ELOB and ELOC), RBX1 and substrate-specific adapter KLHDC3. May form oligomers as a KLHDC3-ELOB-ELOC complex; this interaction is likely autoinhibitory for the E3 ligase complex. In terms of tissue distribution, expressed specifically in testis, particularly in pachytene spermatocytes.

It localises to the cytoplasm. The protein operates within protein modification; protein ubiquitination. Functionally, substrate-recognition component of a Cul2-RING (CRL2) E3 ubiquitin-protein ligase complex of the DesCEND (destruction via C-end degrons) pathway, which recognizes a C-degron located at the extreme C terminus of target proteins, leading to their ubiquitination and degradation. The C-degron recognized by the DesCEND pathway is usually a motif of less than ten residues and can be present in full-length proteins, truncated proteins or proteolytically cleaved forms. The CRL2(KLHDC3) complex specifically recognizes proteins with a glycine (Gly) at the C-terminus, leading to their ubiquitination and degradation: recognizes the C-terminal -Arg-(Xaa)n-Arg-Gly, -Arg-(Xaa)n-Lys-Gly, and -Arg-(Xaa)n-Gln-Gly degrons. The CRL2(KLHDC3) complex mediates ubiquitination and degradation of truncated SELENOV and SEPHS2 selenoproteins produced by failed UGA/Sec decoding, which end with a glycine. May be involved in meiotic recombination process. This is Kelch domain-containing protein 3 from Mus musculus (Mouse).